We begin with the raw amino-acid sequence, 62 residues long: UPF0434 protein Rpic_2808 (62 aa).

This sequence belongs to the UPF0434 family.

The chain is UPF0434 protein Rpic_2808 from Ralstonia pickettii (strain 12J).